Consider the following 285-residue polypeptide: Sulfotransferase 2A2 (285 aa).

Residues lysine 44, serine 45, glycine 46, threonine 47, asparagine 48, and tryptophan 49 each contribute to the 3'-phosphoadenylyl sulfate site. The active-site Proton acceptor is the histidine 99. Positions 121, 129, 184, 218, 247, 248, and 249 each coordinate 3'-phosphoadenylyl sulfate.

This sequence belongs to the sulfotransferase 1 family. In terms of tissue distribution, detected in liver.

Its subcellular location is the cytoplasm. It catalyses the reaction an alcohol + 3'-phosphoadenylyl sulfate = an alkyl sulfate + adenosine 3',5'-bisphosphate + H(+). Its function is as follows. Sulfotransferase that utilizes 3'-phospho-5'-adenylyl sulfate (PAPS) as sulfonate donor to catalyze the sulfate conjugation of a potential wide variety of acceptor molecules bearing a hydroxyl group. Sulfonation increases the water solubility of most compounds, and therefore their renal excretion, but it can also result in bioactivation to form active metabolites. In Rattus norvegicus (Rat), this protein is Sulfotransferase 2A2.